The sequence spans 448 residues: Trigger factor (448 aa).

The region spanning 161–246 is the PPIase FKBP-type domain; it reads GDQVTIDFEG…VHKVAGKQLP (86 aa). Residues 428-448 form a disordered region; it reads ALQAAQQQEGAEEEAQEETSA. Residues 437–448 are compositionally biased toward acidic residues; the sequence is GAEEEAQEETSA.

This sequence belongs to the FKBP-type PPIase family. Tig subfamily.

The protein localises to the cytoplasm. The enzyme catalyses [protein]-peptidylproline (omega=180) = [protein]-peptidylproline (omega=0). Functionally, involved in protein export. Acts as a chaperone by maintaining the newly synthesized protein in an open conformation. Functions as a peptidyl-prolyl cis-trans isomerase. The polypeptide is Trigger factor (Chromohalobacter salexigens (strain ATCC BAA-138 / DSM 3043 / CIP 106854 / NCIMB 13768 / 1H11)).